We begin with the raw amino-acid sequence, 209 residues long: Glycerol-3-phosphate acyltransferase (209 aa).

5 helical membrane passes run 7–27 (IELAGIAGAYFLGSLSSAIIV), 85–105 (AIILVGFASFIGHLYPIFFGF), 117–137 (VMFGLSLPIGAAVAGTWLFVA), 142–162 (ISSLSALIATALAPLYIYLLA), and 166–183 (MAWVSVTAIMTLILFWRH).

Belongs to the PlsY family. In terms of assembly, probably interacts with PlsX.

Its subcellular location is the cell inner membrane. The catalysed reaction is an acyl phosphate + sn-glycerol 3-phosphate = a 1-acyl-sn-glycero-3-phosphate + phosphate. Its pathway is lipid metabolism; phospholipid metabolism. In terms of biological role, catalyzes the transfer of an acyl group from acyl-phosphate (acyl-PO(4)) to glycerol-3-phosphate (G3P) to form lysophosphatidic acid (LPA). This enzyme utilizes acyl-phosphate as fatty acyl donor, but not acyl-CoA or acyl-ACP. The chain is Glycerol-3-phosphate acyltransferase from Hydrogenovibrio crunogenus (strain DSM 25203 / XCL-2) (Thiomicrospira crunogena).